Here is a 193-residue protein sequence, read N- to C-terminus: UPF0301 protein Bfl251 (193 aa).

Belongs to the UPF0301 (AlgH) family.

The chain is UPF0301 protein Bfl251 from Blochmanniella floridana.